A 230-amino-acid chain; its full sequence is NAD(P)H-hydrate epimerase (230 aa).

The YjeF N-terminal domain maps to 11-218 (AIDVDQELFT…ALQRKYELNL (208 aa)). A (6S)-NADPHX-binding site is contributed by 61 to 65 (NNGGD). Residues Asn62 and Asp126 each coordinate K(+). (6S)-NADPHX contacts are provided by residues 130–136 (GFSFKPP) and Asp159. Residue Ser162 coordinates K(+).

Belongs to the NnrE/AIBP family. Requires K(+) as cofactor.

It catalyses the reaction (6R)-NADHX = (6S)-NADHX. The enzyme catalyses (6R)-NADPHX = (6S)-NADPHX. Functionally, catalyzes the epimerization of the S- and R-forms of NAD(P)HX, a damaged form of NAD(P)H that is a result of enzymatic or heat-dependent hydration. This is a prerequisite for the S-specific NAD(P)H-hydrate dehydratase to allow the repair of both epimers of NAD(P)HX. This is NAD(P)H-hydrate epimerase from Drosophila erecta (Fruit fly).